The chain runs to 432 residues: D-amino acid dehydrogenase (432 aa).

Position 3 to 17 (3 to 17 (VVILGSGVVGVTSAW)) interacts with FAD.

It belongs to the DadA oxidoreductase family. FAD is required as a cofactor.

The enzyme catalyses a D-alpha-amino acid + A + H2O = a 2-oxocarboxylate + AH2 + NH4(+). The protein operates within amino-acid degradation; D-alanine degradation; NH(3) and pyruvate from D-alanine: step 1/1. In terms of biological role, oxidative deamination of D-amino acids. The polypeptide is D-amino acid dehydrogenase (Salmonella choleraesuis (strain SC-B67)).